A 1256-amino-acid polypeptide reads, in one-letter code: MLFPLQVAAVTSSVRDDPLEHCVSPRTRARSPEICKMADNLDEFIEEQKARLAEDKAELESDPPYMEMKGKLSAKLSENSKILISMAKENIPPNSQQTRGSLGIDYGLSLPLGEDYERKKHKLKEELRQDYRRYLTQGITQGKRKKNFLSTSETDPSTLGVSLPIGERLSAKERLKLERNKEYNQFLRGKEESSEKFRQVEKSTEPKSQRNKKPIGQVKPDLTSQIQTSCENSEGPRKDVLTPSEAYEELLNQRRLEEDRYRQLDDEIELRNRRIIKKANEEVGISNLKHQRFASKAGIPDRRFHRFNEDRVFDRRYHRPDQDPEVSEEMDERFRYESDFDRRLSRVYTNDRMHRNKRGNMPPMEHDGDVIEQSNIRISSAENKSAPDNETSKSANQDTCSPFAGMLFGGEDRELIQRRKEKYRLELLEQMAEQQRNKRREKDLELRVAASGAQDPEKSPDRLKQFSVAPRHFEEMIPPERPRIAFQTPLPPLSAPSVPPIPSVHPVPSQNEDLRSGLSSALGEMVSPRIAPLPPPPLLPPLATNYRTPYDDAYYFYGSRNTFDPSLAYYGSGMMGVQPAAYVSAPVTHQLAQPVVNTVGQNELKITSDQVINSGLIFEDKPKPSKQSLQSYQEALQQQIREREERRKKEREEKEEYEAKLEAEMRTYNPWGKGGGGAPLRDAKGNLITDLNRMHRQNIDAYHNPDARTYEDKRAVVSLDPNLATSNAENLEDAANKSSGHMQTQSSPFARGNVFGEPPTELQIKQQELYKNFLRFQIEEKKQREEAERERLRIAEEKEERRLAEQRARIQQEYEEEQEKKREKEEEQRLKNEEHIRLAEERQKEAERKKKEEEEKYNLQLQHYCERDNLIGEETKHMRQPSPIVPALQNKIASKLQRPPSVDSIIRSFIHESSMSRAQSPPVPARKNQLRAEEEKKNVIMELSEMRKQLRSEERRLQERLLHMDSDDEIPIRKKERNPMDIFDMARHRLQAPVRRQSPKGLDAATFQNVHDFNELKDRDSETRVDLKFMYLDPPRDHHTLEIQQQALLREQQKRLNRIKMQEGAKVDLDAIPSAKVREQRMPRDDTSDFLKNSLLESDSAFIGAYGETYPAIEDDVLPPPSQLPSARERRRNKWKGLDIDSSRPNVAPDGLSLKSISSVNVDELRVRNEERMRRLNEFHNKPINTDDESSLVDPDDIMKHIGDDGSNSVATEPWLRPGTSETLKRFMAEQLNQEQQQIPGKPGTFTWQGLSTAHG.

Coiled coils occupy residues 38–62 (ADNL…LESD) and 114–135 (EDYE…RRYL). The segment covering 189–208 (GKEESSEKFRQVEKSTEPKS) has biased composition (basic and acidic residues). Disordered regions lie at residues 189–244 (GKEE…LTPS) and 381–403 (AENK…CSPF). Residues 222–232 (LTSQIQTSCEN) show a composition bias toward polar residues. The residue at position 244 (S244) is a Phosphoserine. A coiled-coil region spans residues 244 to 270 (SEAYEELLNQRRLEEDRYRQLDDEIEL). A coiled-coil region spans residues 417–449 (QRRKEKYRLELLEQMAEQQRNKRREKDLELRVA). S459 and S527 each carry phosphoserine. The stretch at 625 to 669 (SKQSLQSYQEALQQQIREREERRKKEREEKEEYEAKLEAEMRTYN) forms a coiled coil. Disordered regions lie at residues 735–757 (ANKS…VFGE) and 813–853 (EYEE…KKEE). Residues 736 to 748 (NKSSGHMQTQSSP) are compositionally biased toward polar residues. Phosphoserine is present on residues S901 and S920. The segment at 913–932 (SSMSRAQSPPVPARKNQLRA) is disordered. Positions 925–964 (ARKNQLRAEEEKKNVIMELSEMRKQLRSEERRLQERLLHM) form a coiled coil. S966 carries the phosphoserine modification. Disordered regions lie at residues 1114–1147 (EDDV…RPNV) and 1232–1256 (LNQE…TAHG). A compositionally biased stretch (polar residues) spans 1246-1256 (FTWQGLSTAHG).

In terms of assembly, interacts with PLEKHG6. Interacts with ARMC9, TOGARAM1, CCDC66, CEP104 and CEP290. In terms of processing, phosphorylated. Phosphorylation increases in colcemide-treated cells. Expressed in adult and fetal brain with enrichment in the cerebellum. Detected in testis.

The protein resides in the cytoplasm. It is found in the cytoskeleton. The protein localises to the microtubule organizing center. It localises to the centrosome. Its subcellular location is the spindle. The protein resides in the spindle pole. It is found in the cell projection. The protein localises to the cilium. Functionally, may play a role in cell-cycle-dependent microtubule organization. The polypeptide is Centrosome and spindle pole-associated protein 1 (CSPP1) (Homo sapiens (Human)).